The chain runs to 196 residues: Beta-crystallin A4 (196 aa).

Threonine 2 carries the post-translational modification N-acetylthreonine. Residues 2–11 (TLQCTKSAGH) form an N-terminal arm region. Beta/gamma crystallin 'Greek key' domains follow at residues 12–51 (WRMVVWDEEGFQGRRHEFTAECPSVLELGFETVRSLKVLS) and 52–98 (GAWV…RPVA). A connecting peptide region spans residues 99–104 (CANHRD). Beta/gamma crystallin 'Greek key' domains lie at 105 to 146 (SRLT…HVQS) and 147 to 195 (GAWV…RRIQ).

It belongs to the beta/gamma-crystallin family. In terms of assembly, homo/heterodimer, or complexes of higher-order. The structure of beta-crystallin oligomers seems to be stabilized through interactions between the N-terminal arms.

Its function is as follows. Crystallins are the dominant structural components of the vertebrate eye lens. This Mus musculus (Mouse) protein is Beta-crystallin A4 (Cryba4).